We begin with the raw amino-acid sequence, 217 residues long: ATP-dependent Clp protease proteolytic subunit 1 (217 aa).

Residues 1-24 (MTPLTTGWHPALSPRAEEGDTPPS) form a disordered region. The active-site Nucleophile is Ser-108. The active site involves His-133.

This sequence belongs to the peptidase S14 family. In terms of assembly, fourteen ClpP subunits assemble into 2 heptameric rings which stack back to back to give a disk-like structure with a central cavity, resembling the structure of eukaryotic proteasomes.

The protein localises to the cytoplasm. It carries out the reaction Hydrolysis of proteins to small peptides in the presence of ATP and magnesium. alpha-casein is the usual test substrate. In the absence of ATP, only oligopeptides shorter than five residues are hydrolyzed (such as succinyl-Leu-Tyr-|-NHMec, and Leu-Tyr-Leu-|-Tyr-Trp, in which cleavage of the -Tyr-|-Leu- and -Tyr-|-Trp bonds also occurs).. Cleaves peptides in various proteins in a process that requires ATP hydrolysis. Has a chymotrypsin-like activity. Plays a major role in the degradation of misfolded proteins. The sequence is that of ATP-dependent Clp protease proteolytic subunit 1 from Streptomyces avermitilis (strain ATCC 31267 / DSM 46492 / JCM 5070 / NBRC 14893 / NCIMB 12804 / NRRL 8165 / MA-4680).